The primary structure comprises 62 residues: Large ribosomal subunit protein eL24 (62 aa).

Zn(2+)-binding residues include Cys-6, Cys-9, Cys-32, and Cys-36. Residues 6–36 (CSFCGADIPPGYGIMYVRSDGTVQRFCSRKC) form a C4-type zinc finger.

Belongs to the eukaryotic ribosomal protein eL24 family. Part of the 50S ribosomal subunit. Forms a cluster with proteins L3 and L14. Requires Zn(2+) as cofactor.

In terms of biological role, binds to the 23S rRNA. In Pyrobaculum calidifontis (strain DSM 21063 / JCM 11548 / VA1), this protein is Large ribosomal subunit protein eL24.